A 224-amino-acid chain; its full sequence is Lipoprotein-releasing system ATP-binding protein LolD (224 aa).

Residues 4 to 224 form the ABC transporter domain; sequence YTAKDISKNY…TLLDGSLQEE (221 aa). 40-47 is a binding site for ATP; that stretch reads GASGSGKT.

Belongs to the ABC transporter superfamily. Lipoprotein translocase (TC 3.A.1.125) family. As to quaternary structure, the complex is composed of two ATP-binding proteins (LolD) and two transmembrane proteins (LolC and LolE).

It is found in the cell inner membrane. Part of the ABC transporter complex LolCDE involved in the translocation of mature outer membrane-directed lipoproteins, from the inner membrane to the periplasmic chaperone, LolA. Responsible for the formation of the LolA-lipoprotein complex in an ATP-dependent manner. The protein is Lipoprotein-releasing system ATP-binding protein LolD of Desulfotalea psychrophila (strain LSv54 / DSM 12343).